The sequence spans 328 residues: Phosphate acyltransferase (328 aa).

It belongs to the PlsX family. As to quaternary structure, homodimer. Probably interacts with PlsY.

The protein localises to the cytoplasm. The enzyme catalyses a fatty acyl-[ACP] + phosphate = an acyl phosphate + holo-[ACP]. It participates in lipid metabolism; phospholipid metabolism. Its function is as follows. Catalyzes the reversible formation of acyl-phosphate (acyl-PO(4)) from acyl-[acyl-carrier-protein] (acyl-ACP). This enzyme utilizes acyl-ACP as fatty acyl donor, but not acyl-CoA. The protein is Phosphate acyltransferase of Mycoplasma genitalium (strain ATCC 33530 / DSM 19775 / NCTC 10195 / G37) (Mycoplasmoides genitalium).